We begin with the raw amino-acid sequence, 424 residues long: Putative pachytene checkpoint protein 2 (424 aa).

179–186 (GPPGTGKT) is an ATP binding site.

Belongs to the AAA ATPase family. PCH2 subfamily.

Plays a key role in chromosome recombination during meiosis. In Caenorhabditis elegans, this protein is Putative pachytene checkpoint protein 2 (pch-2).